The chain runs to 149 residues: Large ribosomal subunit protein uL11 (149 aa).

The protein belongs to the universal ribosomal protein uL11 family. Part of the ribosomal stalk of the 50S ribosomal subunit. Interacts with L10 and the large rRNA to form the base of the stalk. L10 forms an elongated spine to which L12 dimers bind in a sequential fashion forming a multimeric L10(L12)X complex. In terms of processing, one or more lysine residues are methylated.

Forms part of the ribosomal stalk which helps the ribosome interact with GTP-bound translation factors. The protein is Large ribosomal subunit protein uL11 of Methylorubrum extorquens (strain CM4 / NCIMB 13688) (Methylobacterium extorquens).